The sequence spans 568 residues: WW domain-containing protein A (568 aa).

Positions 6 to 129 constitute a C2 domain; it reads PLNNSNGSNS…TGPISHDVVF (124 aa). A WW 1 domain is found at 325–359; it reads VKLPDGWESRIDPVSGKVFYLNHNNKTTSWISPLE. A disordered region spans residues 376–461; it reads TILDNNNNNN…SRPKKTPATP (86 aa). A compositionally biased stretch (low complexity) spans 380-418; the sequence is NNNNNNNNNNNNNNNNNNNNNNINNTNNIQQKQQAQQQP. The segment covering 435 to 451 has biased composition (basic and acidic residues); the sequence is QKEKEKEKEINAEDYKI. Residues 519–552 form the WW 2 domain; it reads QGLPNGWEVRQDQFGRVFYVDHINRATTWTRPTV.

In terms of assembly, interacts with calmodulin in the absence of Ca(2+).

It is found in the nucleus. It localises to the nucleolus. Its subcellular location is the cytoplasm. The protein resides in the cell cortex. The protein localises to the cytoskeleton. Its function is as follows. Involved in regulation of actin cytoskeleton organization and cytokinesis. This chain is WW domain-containing protein A, found in Dictyostelium discoideum (Social amoeba).